Reading from the N-terminus, the 448-residue chain is Probable D-serine dehydratase (448 aa).

An N6-(pyridoxal phosphate)lysine modification is found at lysine 111.

The protein belongs to the serine/threonine dehydratase family. DsdA subfamily. Pyridoxal 5'-phosphate is required as a cofactor.

It carries out the reaction D-serine = pyruvate + NH4(+). The protein is Probable D-serine dehydratase of Rhizobium etli (strain CIAT 652).